The chain runs to 478 residues: Aspartyl/glutamyl-tRNA(Asn/Gln) amidotransferase subunit B (478 aa).

Belongs to the GatB/GatE family. GatB subfamily. Heterotrimer of A, B and C subunits.

The enzyme catalyses L-glutamyl-tRNA(Gln) + L-glutamine + ATP + H2O = L-glutaminyl-tRNA(Gln) + L-glutamate + ADP + phosphate + H(+). The catalysed reaction is L-aspartyl-tRNA(Asn) + L-glutamine + ATP + H2O = L-asparaginyl-tRNA(Asn) + L-glutamate + ADP + phosphate + 2 H(+). Its function is as follows. Allows the formation of correctly charged Asn-tRNA(Asn) or Gln-tRNA(Gln) through the transamidation of misacylated Asp-tRNA(Asn) or Glu-tRNA(Gln) in organisms which lack either or both of asparaginyl-tRNA or glutaminyl-tRNA synthetases. The reaction takes place in the presence of glutamine and ATP through an activated phospho-Asp-tRNA(Asn) or phospho-Glu-tRNA(Gln). In Alkalilimnicola ehrlichii (strain ATCC BAA-1101 / DSM 17681 / MLHE-1), this protein is Aspartyl/glutamyl-tRNA(Asn/Gln) amidotransferase subunit B.